The sequence spans 481 residues: Glutamate--glyoxylate aminotransferase 2 (481 aa).

The residue at position 291 (lysine 291) is an N6-(pyridoxal phosphate)lysine. Residues 479 to 481 carry the Peroxisomal targeting signal motif; the sequence is SRM.

Belongs to the class-I pyridoxal-phosphate-dependent aminotransferase family. Alanine aminotransferase subfamily. As to quaternary structure, homodimer. Requires pyridoxal 5'-phosphate as cofactor. In terms of processing, the N-terminus is blocked. As to expression, expressed at low levels in seedlings, leaves, flowers, roots, and green siliques.

It is found in the peroxisome. It catalyses the reaction L-alanine + 2-oxoglutarate = pyruvate + L-glutamate. The catalysed reaction is glyoxylate + L-alanine = glycine + pyruvate. The enzyme catalyses glycine + 2-oxoglutarate = glyoxylate + L-glutamate. Its pathway is photosynthesis; C4 acid pathway. The protein operates within amino-acid degradation; L-alanine degradation via transaminase pathway; pyruvate from L-alanine: step 1/1. Its function is as follows. Catalyzes the Glu:glyoxylate aminotransferase (GGT), Ala:glyoxylate aminotransferase (AGT), Ala:2-oxoglutarate aminotransferase (AKT) and Glu:pyruvate aminotransferase (GPT) reactions in peroxisomes. This chain is Glutamate--glyoxylate aminotransferase 2 (GGAT2), found in Arabidopsis thaliana (Mouse-ear cress).